We begin with the raw amino-acid sequence, 708 residues long: Polyribonucleotide nucleotidyltransferase (708 aa).

The Mg(2+) site is built by Asp490 and Asp496. The region spanning 557–619 (PRIETMTIPK…KSIDDAIRLI (63 aa)) is the KH domain. The S1 motif domain occupies 629 to 699 (GEVYKGKVRS…KTGKFKLSRK (71 aa)).

The protein belongs to the polyribonucleotide nucleotidyltransferase family. It depends on Mg(2+) as a cofactor.

The protein resides in the cytoplasm. It carries out the reaction RNA(n+1) + phosphate = RNA(n) + a ribonucleoside 5'-diphosphate. Its function is as follows. Involved in mRNA degradation. Catalyzes the phosphorolysis of single-stranded polyribonucleotides processively in the 3'- to 5'-direction. The polypeptide is Polyribonucleotide nucleotidyltransferase (Bacteroides fragilis (strain ATCC 25285 / DSM 2151 / CCUG 4856 / JCM 11019 / LMG 10263 / NCTC 9343 / Onslow / VPI 2553 / EN-2)).